Consider the following 325-residue polypeptide: Isoaspartyl peptidase/L-asparaginase (325 aa).

The active-site Nucleophile is the threonine 193. Residues 221–224 and 243–246 contribute to the substrate site; these read RIGD and TGKG.

This sequence belongs to the Ntn-hydrolase family. Heterotetramer of two alpha and two beta chains arranged as a dimer of alpha/beta heterodimers. Cleaved into an alpha and beta chain by autocatalysis; this activates the enzyme. The N-terminal residue of the beta subunit is responsible for the nucleophile hydrolase activity. As to expression, expressed in ripening seeds and developing nodules.

The enzyme catalyses Cleavage of a beta-linked Asp residue from the N-terminus of a polypeptide.. Functionally, degrades proteins damaged by L-isoaspartyl residue formation (also known as beta-Asp residues). Also has L-asparaginase activity, which is used to liberate stored nitrogen during seed development. This is Isoaspartyl peptidase/L-asparaginase from Lupinus luteus (European yellow lupine).